The chain runs to 313 residues: UPF0761 membrane protein VV0203 (313 aa).

Transmembrane regions (helical) follow at residues 41-61 (YLAY…LSIL), 104-124 (MTAV…SNID), 139-159 (AVFS…LVGA), 185-205 (LLRW…YLLV), 215-235 (AVVG…GFAA), and 249-269 (ALAA…IVLI). The tract at residues 293-313 (LPNNDTELEKDTQRDRFDSES) is disordered. The span at 299 to 313 (ELEKDTQRDRFDSES) shows a compositional bias: basic and acidic residues.

It belongs to the UPF0761 family.

The protein localises to the cell inner membrane. The sequence is that of UPF0761 membrane protein VV0203 from Vibrio vulnificus (strain YJ016).